Reading from the N-terminus, the 512-residue chain is D-alanine--D-alanyl carrier protein ligase (512 aa).

Residue 152–153 (TS) participates in ATP binding. Aspartate 199 contacts D-alanine. 294 to 299 (NAYGPT) contacts ATP. Residue valine 303 participates in D-alanine binding. ATP contacts are provided by residues aspartate 385, 397–400 (YGGR), and lysine 499. Residue lysine 499 coordinates D-alanine.

The protein belongs to the ATP-dependent AMP-binding enzyme family. DltA subfamily.

Its subcellular location is the cytoplasm. It carries out the reaction holo-[D-alanyl-carrier protein] + D-alanine + ATP = D-alanyl-[D-alanyl-carrier protein] + AMP + diphosphate. It functions in the pathway cell wall biogenesis; lipoteichoic acid biosynthesis. Its function is as follows. Catalyzes the first step in the D-alanylation of lipoteichoic acid (LTA), the activation of D-alanine and its transfer onto the D-alanyl carrier protein (Dcp) DltC. In an ATP-dependent two-step reaction, forms a high energy D-alanyl-AMP intermediate, followed by transfer of the D-alanyl residue as a thiol ester to the phosphopantheinyl prosthetic group of the Dcp. D-alanylation of LTA plays an important role in modulating the properties of the cell wall in Gram-positive bacteria, influencing the net charge of the cell wall. The polypeptide is D-alanine--D-alanyl carrier protein ligase (Streptococcus pyogenes serotype M18 (strain MGAS8232)).